The chain runs to 575 residues: Isocitrate dehydrogenase kinase/phosphatase (575 aa).

Residues 315 to 321 (APGVKGM) and lysine 336 contribute to the ATP site. Aspartate 371 is an active-site residue.

It belongs to the AceK family.

It localises to the cytoplasm. The enzyme catalyses L-seryl-[isocitrate dehydrogenase] + ATP = O-phospho-L-seryl-[isocitrate dehydrogenase] + ADP + H(+). In terms of biological role, bifunctional enzyme which can phosphorylate or dephosphorylate isocitrate dehydrogenase (IDH) on a specific serine residue. This is a regulatory mechanism which enables bacteria to bypass the Krebs cycle via the glyoxylate shunt in response to the source of carbon. When bacteria are grown on glucose, IDH is fully active and unphosphorylated, but when grown on acetate or ethanol, the activity of IDH declines drastically concomitant with its phosphorylation. This chain is Isocitrate dehydrogenase kinase/phosphatase, found in Yersinia pseudotuberculosis serotype O:1b (strain IP 31758).